A 305-amino-acid polypeptide reads, in one-letter code: uncharacterized protein (305 aa).

The next 10 helical transmembrane spans lie at 11 to 31 (LLLA…KAAL), 37 to 57 (LLFA…VALP), 70 to 90 (IYLV…TIGL), 97 to 117 (LFSA…WLWL), 126 to 146 (VIGL…GFGG), 148 to 168 (ISVI…LGTV), 180 to 200 (IWMV…SGFW), 217 to 237 (LLFI…TLVG), 244 to 264 (VASY…IFLH), and 265 to 285 (EPLT…ICLV). 2 consecutive EamA domains span residues 18–141 (IMWG…VISA) and 161–287 (VSWA…LVNT).

The protein belongs to the EamA transporter family.

Its subcellular location is the cell membrane. This is an uncharacterized protein from Bacillus subtilis (strain 168).